The chain runs to 504 residues: Histidine ammonia-lyase (504 aa).

Positions 141–143 (ASG) form a cross-link, 5-imidazolinone (Ala-Gly). Serine 142 is modified (2,3-didehydroalanine (Ser)).

This sequence belongs to the PAL/histidase family. Contains an active site 4-methylidene-imidazol-5-one (MIO), which is formed autocatalytically by cyclization and dehydration of residues Ala-Ser-Gly.

The protein localises to the cytoplasm. It catalyses the reaction L-histidine = trans-urocanate + NH4(+). The protein operates within amino-acid degradation; L-histidine degradation into L-glutamate; N-formimidoyl-L-glutamate from L-histidine: step 1/3. This chain is Histidine ammonia-lyase, found in Geobacillus kaustophilus (strain HTA426).